The primary structure comprises 287 residues: Nitrogenase iron protein (287 aa).

Residue 8-15 (GKGGIGKS) coordinates ATP. Cys96 contributes to the [4Fe-4S] cluster binding site. At Arg99 the chain carries ADP-ribosylarginine; by dinitrogenase reductase ADP-ribosyltransferase. [4Fe-4S] cluster is bound at residue Cys130.

It belongs to the NifH/BchL/ChlL family. In terms of assembly, homodimer. The cofactor is [4Fe-4S] cluster. Post-translationally, the reversible ADP-ribosylation of Arg-99 inactivates the nitrogenase reductase and regulates nitrogenase activity.

The catalysed reaction is N2 + 8 reduced [2Fe-2S]-[ferredoxin] + 16 ATP + 16 H2O = H2 + 8 oxidized [2Fe-2S]-[ferredoxin] + 2 NH4(+) + 16 ADP + 16 phosphate + 6 H(+). In terms of biological role, the key enzymatic reactions in nitrogen fixation are catalyzed by the nitrogenase complex, which has 2 components: the iron protein and the molybdenum-iron protein. The polypeptide is Nitrogenase iron protein (Frankia casuarinae (strain DSM 45818 / CECT 9043 / HFP020203 / CcI3)).